The sequence spans 208 residues: Peptide deformylase 3 (208 aa).

Positions 120 and 162 each coordinate Fe cation. The active site involves Glu-163. Residue His-166 participates in Fe cation binding.

This sequence belongs to the polypeptide deformylase family. The cofactor is Fe(2+).

The enzyme catalyses N-terminal N-formyl-L-methionyl-[peptide] + H2O = N-terminal L-methionyl-[peptide] + formate. Its function is as follows. Removes the formyl group from the N-terminal Met of newly synthesized proteins. Requires at least a dipeptide for an efficient rate of reaction. N-terminal L-methionine is a prerequisite for activity but the enzyme has broad specificity at other positions. In Streptomyces coelicolor (strain ATCC BAA-471 / A3(2) / M145), this protein is Peptide deformylase 3.